The primary structure comprises 128 residues: Large ribosomal subunit protein bL12 (128 aa).

Belongs to the bacterial ribosomal protein bL12 family. Homodimer. Part of the ribosomal stalk of the 50S ribosomal subunit. Forms a multimeric L10(L12)X complex, where L10 forms an elongated spine to which 2 to 4 L12 dimers bind in a sequential fashion. Binds GTP-bound translation factors.

Its function is as follows. Forms part of the ribosomal stalk which helps the ribosome interact with GTP-bound translation factors. Is thus essential for accurate translation. The chain is Large ribosomal subunit protein bL12 from Kosmotoga olearia (strain ATCC BAA-1733 / DSM 21960 / TBF 19.5.1).